Reading from the N-terminus, the 262-residue chain is Thiazole synthase (262 aa).

The active-site Schiff-base intermediate with DXP is lysine 105. Residues glycine 166, 192 to 193 (AG), and 214 to 215 (NT) contribute to the 1-deoxy-D-xylulose 5-phosphate site.

The protein belongs to the ThiG family. As to quaternary structure, homotetramer. Forms heterodimers with either ThiH or ThiS.

The protein localises to the cytoplasm. It catalyses the reaction [ThiS sulfur-carrier protein]-C-terminal-Gly-aminoethanethioate + 2-iminoacetate + 1-deoxy-D-xylulose 5-phosphate = [ThiS sulfur-carrier protein]-C-terminal Gly-Gly + 2-[(2R,5Z)-2-carboxy-4-methylthiazol-5(2H)-ylidene]ethyl phosphate + 2 H2O + H(+). It functions in the pathway cofactor biosynthesis; thiamine diphosphate biosynthesis. Its function is as follows. Catalyzes the rearrangement of 1-deoxy-D-xylulose 5-phosphate (DXP) to produce the thiazole phosphate moiety of thiamine. Sulfur is provided by the thiocarboxylate moiety of the carrier protein ThiS. In vitro, sulfur can be provided by H(2)S. The polypeptide is Thiazole synthase (Phenylobacterium zucineum (strain HLK1)).